Reading from the N-terminus, the 476-residue chain is Siroheme synthase (476 aa).

Positions 1–203 are precorrin-2 dehydrogenase /sirohydrochlorin ferrochelatase; the sequence is MHYFPVFADL…RQTEAAKKEL (203 aa). NAD(+) contacts are provided by residues 22-23 and 43-44; these read GV and QK. Ser128 carries the phosphoserine modification. The uroporphyrinogen-III C-methyltransferase stretch occupies residues 214–476; that stretch reads GFVSLVGAGP…LDSLRIESVA (263 aa). Residue Pro223 coordinates S-adenosyl-L-methionine. Residue Asp246 is the Proton acceptor of the active site. Lys268 (proton donor) is an active-site residue. Residues 299–301, Val304, 329–330, Met381, and Gly410 contribute to the S-adenosyl-L-methionine site; these read GGD and TA.

In the N-terminal section; belongs to the precorrin-2 dehydrogenase / sirohydrochlorin ferrochelatase family. This sequence in the C-terminal section; belongs to the precorrin methyltransferase family.

It catalyses the reaction uroporphyrinogen III + 2 S-adenosyl-L-methionine = precorrin-2 + 2 S-adenosyl-L-homocysteine + H(+). The catalysed reaction is precorrin-2 + NAD(+) = sirohydrochlorin + NADH + 2 H(+). It carries out the reaction siroheme + 2 H(+) = sirohydrochlorin + Fe(2+). It functions in the pathway cofactor biosynthesis; adenosylcobalamin biosynthesis; precorrin-2 from uroporphyrinogen III: step 1/1. It participates in cofactor biosynthesis; adenosylcobalamin biosynthesis; sirohydrochlorin from precorrin-2: step 1/1. The protein operates within porphyrin-containing compound metabolism; siroheme biosynthesis; precorrin-2 from uroporphyrinogen III: step 1/1. Its pathway is porphyrin-containing compound metabolism; siroheme biosynthesis; siroheme from sirohydrochlorin: step 1/1. It functions in the pathway porphyrin-containing compound metabolism; siroheme biosynthesis; sirohydrochlorin from precorrin-2: step 1/1. Multifunctional enzyme that catalyzes the SAM-dependent methylations of uroporphyrinogen III at position C-2 and C-7 to form precorrin-2 via precorrin-1. Then it catalyzes the NAD-dependent ring dehydrogenation of precorrin-2 to yield sirohydrochlorin. Finally, it catalyzes the ferrochelation of sirohydrochlorin to yield siroheme. This chain is Siroheme synthase, found in Actinobacillus succinogenes (strain ATCC 55618 / DSM 22257 / CCUG 43843 / 130Z).